The primary structure comprises 175 residues: Large ribosomal subunit protein uL10 (175 aa).

Belongs to the universal ribosomal protein uL10 family. In terms of assembly, part of the ribosomal stalk of the 50S ribosomal subunit. The N-terminus interacts with L11 and the large rRNA to form the base of the stalk. The C-terminus forms an elongated spine to which L12 dimers bind in a sequential fashion forming a multimeric L10(L12)X complex.

Its function is as follows. Forms part of the ribosomal stalk, playing a central role in the interaction of the ribosome with GTP-bound translation factors. This Synechococcus sp. (strain CC9311) protein is Large ribosomal subunit protein uL10.